Consider the following 134-residue polypeptide: CDGSH iron-sulfur domain-containing protein 2 homolog (134 aa).

At 1–35 (MESLSQLVKSTLPNYLSNLPIPDSVGGWFKLSFKD) the chain is on the lumenal side. The chain crosses the membrane as a helical span at residues 36–58 (WLALIPPTVVVAGIGYTGYLAFC). Over 59 to 134 (PAAQARCSAT…NVGPVVVKKQ (76 aa)) the chain is Cytoplasmic. Positions 100, 102, 111, and 115 each coordinate [2Fe-2S] cluster.

It belongs to the CISD protein family. CISD2 subfamily. The cofactor is [2Fe-2S] cluster.

The protein resides in the endoplasmic reticulum membrane. The chain is CDGSH iron-sulfur domain-containing protein 2 homolog from Drosophila ananassae (Fruit fly).